Here is a 349-residue protein sequence, read N- to C-terminus: 2-oxoglutarate and iron-dependent oxygenase domain-containing protein 2 (349 aa).

Residues 211 to 305 (DSHRAFVVKY…RWNLILWMRA (95 aa)) form the Fe2OG dioxygenase domain. Fe cation is bound by residues H231, D233, and H286. R296 contacts 2-oxoglutarate.

The protein belongs to the OGFOD2 family. It depends on Fe(2+) as a cofactor. The cofactor is L-ascorbate.

The protein is 2-oxoglutarate and iron-dependent oxygenase domain-containing protein 2 (ogfod2) of Xenopus tropicalis (Western clawed frog).